An 876-amino-acid chain; its full sequence is Senescence-induced receptor-like serine/threonine-protein kinase (876 aa).

The signal sequence occupies residues 1–24; the sequence is MAMLKSLSSILFTSFALLFFLVHA. Topologically, residues 25–517 are extracellular; the sequence is QDQSGFISID…SNTKKKNKNG (493 aa). 3 LRR repeats span residues 415–438, 439–462, and 463–483; these read RVVS…SNLT, SIRK…ANLP, and NLTE…QRLH. The chain crosses the membrane as a helical span at residues 518–538; sequence YIIPLVVVGIIVVLLTALALF. Over 539–876 the chain is Cytoplasmic; that stretch reads RRFKKKQQRG…LDTEMVPRAR (338 aa). Residues 574 to 847 form the Protein kinase domain; sequence NNFERVIGKG…VVMELKQIVY (274 aa). ATP-binding positions include 580-588 and lysine 601; that span reads IGKGGFGKV. Phosphotyrosine is present on tyrosine 646. Catalysis depends on aspartate 697, which acts as the Proton acceptor. Serine 731 carries the phosphoserine modification. Threonine 732 carries the post-translational modification Phosphothreonine. Residue tyrosine 745 is modified to Phosphotyrosine.

The protein belongs to the protein kinase superfamily. Ser/Thr protein kinase family.

It localises to the membrane. In terms of biological role, involved in innate immune response of plants. This Arabidopsis thaliana (Mouse-ear cress) protein is Senescence-induced receptor-like serine/threonine-protein kinase (SIRK).